Consider the following 374-residue polypeptide: Tuliposide A-converting enzyme b2, amyloplastic (374 aa).

The N-terminal 68 residues, M1 to T68, are a transit peptide targeting the amyloplast. Residue S226 is the Acyl-ester intermediate of the active site. Residues D316 and H348 each act as charge relay system in the active site.

Belongs to the AB hydrolase superfamily. In terms of assembly, homodimer. In terms of tissue distribution, highly expressed in pistil and bulb scales. Lower expression in stem, and barely detected in root, leaf, petal and stamen.

It is found in the plastid. The protein localises to the amyloplast. It catalyses the reaction 6-tuliposide A = tulipalin A + D-glucose. In terms of biological role, lactone-forming carboxylesterases, specifically catalyzing intramolecular transesterification, but not hydrolysis. Involved in the biosynthesis of tulipalins, defensive chemicals that show antimicrobial activities against a broad range of strains of bacteria and fungi. Substrates are 6-tuliposide A &gt; 6-tuliposide B. In Tulipa gesneriana (Garden tulip), this protein is Tuliposide A-converting enzyme b2, amyloplastic (TCEA-B2).